A 592-amino-acid polypeptide reads, in one-letter code: Pectinesterase/pectinesterase inhibitor 3 (592 aa).

The N-terminal stretch at 1-35 (MAPSMKEIFSKDNFKKNKKLVLLSAAVALLFVAAV) is a signal peptide. Residues 36–238 (AGISAGASKA…KITSNNRKLK (203 aa)) constitute a propeptide, removed in mature 42 kDa form. Residues 36 to 273 (AGISAGASKA…WLSAGDRRLL (238 aa)) constitute a propeptide, removed in mature 38 kDa form. The pectinesterase inhibitor 3 stretch occupies residues 53–212 (PSSHAVLRSS…EHMCSNALAM (160 aa)). 2 N-linked (GlcNAc...) asparagine glycosylation sites follow: N96 and N215. Positions 281–578 (DATVAADGSG…YTAGQFIGGG (298 aa)) are pectinesterase 3. Residues T356 and Q386 each coordinate substrate. D409 (proton donor; for pectinesterase activity) is an active-site residue. The cysteines at positions 423 and 443 are disulfide-linked. D430 functions as the Nucleophile; for pectinesterase activity in the catalytic mechanism. Positions 454, 498, and 500 each coordinate substrate.

It in the N-terminal section; belongs to the PMEI family. The protein in the C-terminal section; belongs to the pectinesterase family. As to quaternary structure, interacts with BIIDXI and At5g11420. Binds reversibly to PMEI4, PMEI7 and PMEI8 to be inhibited; the stability of the PME3-PMEIs complexes and the inhibition of the pectin methylesterase (PME) activity is pH-dependent, based on protonation status of amino-acids at the complex interface. In terms of tissue distribution, expressed in roots, cotyledons, hypocotyls, seedlings, leaves, stems, flowers, dry seeds and siliques. Accumulates in etiolated hypocotyls (at protein level).

The protein localises to the secreted. Its subcellular location is the extracellular space. The protein resides in the apoplast. It is found in the cell wall. It carries out the reaction [(1-&gt;4)-alpha-D-galacturonosyl methyl ester](n) + n H2O = [(1-&gt;4)-alpha-D-galacturonosyl](n) + n methanol + n H(+). The protein operates within glycan metabolism; pectin degradation; 2-dehydro-3-deoxy-D-gluconate from pectin: step 1/5. Regulated negatively by pectinesterase inhibitors (e.g. PMEI3, PMEI4, PMEI7 and PMEI9) in a pH-dependent manner, mainly in slightly acidic conditions (pH 6.0 and 5.0), especially in dark-grown hypocotyls; this processus relies on changes in the protonation of amino acids involved in intermolecular and intramolecular interactions. Its function is as follows. Acts in the modification of cell walls via demethylesterification of cell wall pectin. Required for zinc Zn(2+) homeostasis and to monitor Zn(2+) influence on cell wall-controlled growth processes such as root cell elongation. Monitors seed germination and favors root hairs production. Prevents cruciferin seed storage proteins activity, but promotes the expression of genes involved in cell wall organization and remodeling as well as genes involved in lipid and protein metabolism, during post-germinative growth of seedlings. Confers sensitivity to Zn(2+) when overexpressed. Acts as a susceptibility factor required for the initial colonization of the host tissue by virulent pathogens including Botrytis cinerea and Pectobacterium carotovorum, probably by facilitating cell wall pectine degradation by pathogen pectic enzymes after its demethylesterification. The polypeptide is Pectinesterase/pectinesterase inhibitor 3 (Arabidopsis thaliana (Mouse-ear cress)).